Reading from the N-terminus, the 915-residue chain is Alanine--tRNA ligase (915 aa).

Residues His605, His609, Cys709, and His713 each coordinate Zn(2+). The segment at 882–901 (GGGGDERLAQGGGRNPDGLT) is disordered.

This sequence belongs to the class-II aminoacyl-tRNA synthetase family. Zn(2+) is required as a cofactor.

The protein resides in the cytoplasm. It catalyses the reaction tRNA(Ala) + L-alanine + ATP = L-alanyl-tRNA(Ala) + AMP + diphosphate. Its function is as follows. Catalyzes the attachment of alanine to tRNA(Ala) in a two-step reaction: alanine is first activated by ATP to form Ala-AMP and then transferred to the acceptor end of tRNA(Ala). Also edits incorrectly charged Ser-tRNA(Ala) and Gly-tRNA(Ala) via its editing domain. This Methanopyrus kandleri (strain AV19 / DSM 6324 / JCM 9639 / NBRC 100938) protein is Alanine--tRNA ligase.